The chain runs to 242 residues: Ribosomal RNA small subunit methyltransferase G (242 aa).

S-adenosyl-L-methionine contacts are provided by residues Gly78, Phe83, 129–130, and Arg148; that span reads AE. Residues 221–242 form a disordered region; it reads TKKRYPRKAGVPEKSPIGGKHD.

This sequence belongs to the methyltransferase superfamily. RNA methyltransferase RsmG family.

It is found in the cytoplasm. Functionally, specifically methylates the N7 position of a guanine in 16S rRNA. The chain is Ribosomal RNA small subunit methyltransferase G from Oenococcus oeni (strain ATCC BAA-331 / PSU-1).